The chain runs to 281 residues: UPF0273 protein PAE3143 (281 aa).

Residues 4–248 form the KaiC domain; sequence PRVRSYVPGL…YIKITGSSVR (245 aa). An ATP-binding site is contributed by 31 to 38; sequence GGPGTGKS.

Belongs to the UPF0273 family.

The chain is UPF0273 protein PAE3143 from Pyrobaculum aerophilum (strain ATCC 51768 / DSM 7523 / JCM 9630 / CIP 104966 / NBRC 100827 / IM2).